Consider the following 417-residue polypeptide: NADH-quinone oxidoreductase subunit D (417 aa).

The protein belongs to the complex I 49 kDa subunit family. NDH-1 is composed of 14 different subunits. Subunits NuoB, C, D, E, F, and G constitute the peripheral sector of the complex.

The protein localises to the cell inner membrane. The catalysed reaction is a quinone + NADH + 5 H(+)(in) = a quinol + NAD(+) + 4 H(+)(out). NDH-1 shuttles electrons from NADH, via FMN and iron-sulfur (Fe-S) centers, to quinones in the respiratory chain. The immediate electron acceptor for the enzyme in this species is believed to be ubiquinone. Couples the redox reaction to proton translocation (for every two electrons transferred, four hydrogen ions are translocated across the cytoplasmic membrane), and thus conserves the redox energy in a proton gradient. This Burkholderia orbicola (strain MC0-3) protein is NADH-quinone oxidoreductase subunit D.